The chain runs to 534 residues: 2,3-bisphosphoglycerate-independent phosphoglycerate mutase (534 aa).

Positions 15 and 65 each coordinate Mn(2+). S65 serves as the catalytic Phosphoserine intermediate. Residues H126, 156–157 (RD), R188, R194, 260–263 (RPDR), and K333 each bind substrate. 5 residues coordinate Mn(2+): D400, H404, D441, H442, and H459.

Belongs to the BPG-independent phosphoglycerate mutase family. In terms of assembly, monomer. Mn(2+) serves as cofactor.

It catalyses the reaction (2R)-2-phosphoglycerate = (2R)-3-phosphoglycerate. It participates in carbohydrate degradation; glycolysis; pyruvate from D-glyceraldehyde 3-phosphate: step 3/5. Its function is as follows. Catalyzes the interconversion of 2-phosphoglycerate and 3-phosphoglycerate. The polypeptide is 2,3-bisphosphoglycerate-independent phosphoglycerate mutase (Acaryochloris marina (strain MBIC 11017)).